The chain runs to 410 residues: 45 kDa immediate-early protein 2 (410 aa).

Residues 36–166 (SEEEQGEEVE…SKRISELDNE (131 aa)) are disordered. Composition is skewed to low complexity over residues 47–67 (RGATASSPSTGSGTPRVTSPT), 90–101 (SSSSSSCSSASD), and 132–147 (AASSSLLSCGHQSSGG). A zinc finger spans residues 257–283 (VRCRLGTMCNLALSTPFLMEHTMPVTH).

Functionally, activates the E1.7 promoter. This activation is augmented by the IE1 protein. It down-regulates the transcription of genes under the control of the major IE promoter. This Homo sapiens (Human) protein is 45 kDa immediate-early protein 2 (UL122).